The following is a 261-amino-acid chain: 14-3-3-like protein GF14-12 (261 aa).

The protein belongs to the 14-3-3 family.

Functionally, is associated with a DNA binding complex to bind to the G box, a well-characterized cis-acting DNA regulatory element found in plant genes. In Zea mays (Maize), this protein is 14-3-3-like protein GF14-12 (GRF2).